A 468-amino-acid chain; its full sequence is Soluble pyridine nucleotide transhydrogenase (468 aa).

Position 36 to 45 (36 to 45) interacts with FAD; sequence ERYKNVGGGC.

This sequence belongs to the class-I pyridine nucleotide-disulfide oxidoreductase family. Requires FAD as cofactor.

It is found in the cytoplasm. The enzyme catalyses NAD(+) + NADPH = NADH + NADP(+). Its function is as follows. Conversion of NADPH, generated by peripheral catabolic pathways, to NADH, which can enter the respiratory chain for energy generation. The chain is Soluble pyridine nucleotide transhydrogenase from Hamiltonella defensa subsp. Acyrthosiphon pisum (strain 5AT).